The chain runs to 426 residues: Adenylosuccinate synthetase (426 aa).

GTP-binding positions include 12–18 (GDEGKGK) and 40–42 (GHT). Asp13 acts as the Proton acceptor in catalysis. The Mg(2+) site is built by Asp13 and Gly40. IMP is bound by residues 13–16 (DEGK), 38–41 (NAGH), Thr125, Arg139, Gln221, Thr236, and Arg300. His41 serves as the catalytic Proton donor. 296 to 302 (TTTGRPR) serves as a coordination point for substrate. GTP-binding positions include Arg302, 328 to 330 (KLD), and 410 to 412 (AVG).

This sequence belongs to the adenylosuccinate synthetase family. In terms of assembly, homodimer. Mg(2+) is required as a cofactor.

The protein localises to the cytoplasm. It carries out the reaction IMP + L-aspartate + GTP = N(6)-(1,2-dicarboxyethyl)-AMP + GDP + phosphate + 2 H(+). It participates in purine metabolism; AMP biosynthesis via de novo pathway; AMP from IMP: step 1/2. Its function is as follows. Plays an important role in the de novo pathway of purine nucleotide biosynthesis. Catalyzes the first committed step in the biosynthesis of AMP from IMP. The sequence is that of Adenylosuccinate synthetase from Syntrophomonas wolfei subsp. wolfei (strain DSM 2245B / Goettingen).